The primary structure comprises 141 residues: Nucleoside triphosphatase NudI (141 aa).

The 141-residue stretch at 1-141 (MRQRTIVCPL…RHTLALKGLL (141 aa)) folds into the Nudix hydrolase domain. Positions 38 to 59 (GGVEPGERIEEALRREIREELG) match the Nudix box motif.

It belongs to the Nudix hydrolase family. NudI subfamily. In terms of assembly, monomer. Mg(2+) serves as cofactor.

The enzyme catalyses a ribonucleoside 5'-triphosphate + H2O = a ribonucleoside 5'-phosphate + diphosphate + H(+). It catalyses the reaction a 2'-deoxyribonucleoside 5'-triphosphate + H2O = a 2'-deoxyribonucleoside 5'-phosphate + diphosphate + H(+). It carries out the reaction dUTP + H2O = dUMP + diphosphate + H(+). The catalysed reaction is dTTP + H2O = dTMP + diphosphate + H(+). The enzyme catalyses dCTP + H2O = dCMP + diphosphate + H(+). In terms of biological role, catalyzes the hydrolysis of nucleoside triphosphates, with a preference for pyrimidine deoxynucleoside triphosphates (dUTP, dTTP and dCTP). This Salmonella heidelberg (strain SL476) protein is Nucleoside triphosphatase NudI.